The following is a 1209-amino-acid chain: Major DNA-binding protein (1209 aa).

A disordered region spans residues 290–312 (NAGKGSGRAQRQGDGSGSKNSAS). Residues 503–516 (CGLCNQATRPACAH) fold into a zinc finger. The Required for filament formation signature appears at 849–850 (FW). The interval 1182 to 1209 (QKRSLPDDILFDMGAPPEKKSGLTFDML) is required for nuclear localization.

The protein belongs to the herpesviridae major DNA-binding protein family. In terms of assembly, homooligomers. Forms double-helical filaments necessary for the formation of replication compartments within the host nucleus. Interacts with the origin-binding protein. Interacts with the helicase primase complex; this interaction stimulates primer synthesis activity of the helicase-primase complex. Interacts with the DNA polymerase. Interacts with the alkaline exonuclease; this interaction increases its nuclease processivity.

Its subcellular location is the host nucleus. In terms of biological role, plays several crucial roles in viral infection. Participates in the opening of the viral DNA origin to initiate replication by interacting with the origin-binding protein. May disrupt loops, hairpins and other secondary structures present on ssDNA to reduce and eliminate pausing of viral DNA polymerase at specific sites during elongation. Promotes viral DNA recombination by performing strand-transfer, characterized by the ability to transfer a DNA strand from a linear duplex to a complementary single-stranded DNA circle. Can also catalyze the renaturation of complementary single strands. Additionally, reorganizes the host cell nucleus, leading to the formation of prereplicative sites and replication compartments. This process is driven by the protein which can form double-helical filaments in the absence of DNA. This chain is Major DNA-binding protein, found in Equine herpesvirus 1 (strain V592) (EHV-1).